The following is a 149-amino-acid chain: Transcriptional repressor NrdR (149 aa).

Residues 3 to 34 (CPFCSHLETQVIETRVFEDAASIRRRRQCAAC) fold into a zinc finger. In terms of domain architecture, ATP-cone spans 49 to 139 (PAVVKKDGRR…VYRSFEGIDD (91 aa)).

This sequence belongs to the NrdR family. The cofactor is Zn(2+).

Negatively regulates transcription of bacterial ribonucleotide reductase nrd genes and operons by binding to NrdR-boxes. This Verminephrobacter eiseniae (strain EF01-2) protein is Transcriptional repressor NrdR.